The sequence spans 1242 residues: DNA polymerase catalytic subunit (1242 aa).

Disordered stretches follow at residues 14-38, 644-665, and 1109-1162; these read GAVA…RPPQ, LQSA…SSSS, and APQG…RKPP. Low complexity predominate over residues 653–665; it reads GVSPGSGSNSSSS. A compositionally biased stretch (polar residues) spans 1111-1125; sequence QGSSDNGDSVTTGVV. The span at 1145–1155 shows a compositional bias: basic and acidic residues; that stretch reads ESNRRGGEPAK.

The protein belongs to the DNA polymerase type-B family. In terms of assembly, forms a complex with the ssDNA-binding protein UL57, the DNA polymerase processivity factor UL44, and the alkaline exonuclease UL98. Interacts with the putative helicase-primase complex composed of UL70, UL102 and UL105 proteins; these interactions may coordinate leading and lagging strand DNA synthesis at the replication fork.

It is found in the host nucleus. It catalyses the reaction DNA(n) + a 2'-deoxyribonucleoside 5'-triphosphate = DNA(n+1) + diphosphate. Its function is as follows. Replicates viral genomic DNA in the late phase of lytic infection, producing long concatemeric DNA. The replication complex is composed of six viral proteins: the DNA polymerase, processivity factor, primase, primase-associated factor, helicase, and ssDNA-binding protein. In Homo sapiens (Human), this protein is DNA polymerase catalytic subunit (UL54).